The following is a 590-amino-acid chain: UvrABC system protein C (590 aa).

The GIY-YIG domain occupies A15–V98. In terms of domain architecture, UVR spans G207–F242.

Belongs to the UvrC family. Interacts with UvrB in an incision complex.

The protein resides in the cytoplasm. Functionally, the UvrABC repair system catalyzes the recognition and processing of DNA lesions. UvrC both incises the 5' and 3' sides of the lesion. The N-terminal half is responsible for the 3' incision and the C-terminal half is responsible for the 5' incision. In Halobacterium salinarum (strain ATCC 29341 / DSM 671 / R1), this protein is UvrABC system protein C.